Reading from the N-terminus, the 63-residue chain is Prokaryotic ubiquitin-like protein UBact (63 aa).

The segment at 1-63 (MSGRSTFGRF…SRRYRQRTGE (63 aa)) is disordered. Residues 17–50 (PWERKPGDDEGGPKRPKVERPDTNDLLKRMRRVD) show a composition bias toward basic and acidic residues. Glu-63 participates in a covalent cross-link: Isoglutamyl lysine isopeptide (Glu-Lys) (interchain with K-? in acceptor proteins).

The protein belongs to the ubiquitin-like protein UBact family.

May function as a protein modifier covalently attached to lysine residues of substrate proteins. This may serve to target the modified proteins for degradation by proteasomes. The sequence is that of Prokaryotic ubiquitin-like protein UBact from Handelsmanbacteria sp. (strain RIFCSPLOWO2_12_FULL_64_10).